A 1452-amino-acid polypeptide reads, in one-letter code: Arf-GAP with Rho-GAP domain, ANK repeat and PH domain-containing protein 1 (1452 aa).

One can recognise an SAM domain in the interval 6–70 (DAALSVAEWL…LAGLHRAHAP (65 aa)). The required for interaction with SH3KBP1 stretch occupies residues 81-90 (PVPMKRHIFR). 2 disordered regions span residues 87-258 (HIFR…LPSR) and 271-304 (EGEE…LNPP). Pro residues-rich tracts occupy residues 92 to 104 (PPVP…PPPT), 154 to 167 (SVPP…PPYP), and 205 to 225 (PLQP…PPRL). Acidic residues-rich tracts occupy residues 228 to 239 (EFDDSDYDDVPE) and 271 to 286 (EGEE…DDDH). At Ser-232 the chain carries Phosphoserine. Phosphotyrosine; by PTK6 is present on Tyr-234. Residues 329-421 (PVIKAGWLDK…WMQALQQAVV (93 aa)) enclose the PH 1 domain. Residue Ser-430 is modified to Phosphoserine. Positions 442–531 (QPDRAGSLEL…WLEAMQGAIA (90 aa)) constitute a PH 2 domain. Tyr-506 bears the Phosphotyrosine mark. Residues 537–662 (SEVAERIWAA…RYHPLFGNQE (126 aa)) form the Arf-GAP domain. A C4-type zinc finger spans residues 552-575 (CADCGAAQPDWASINLCVVICKRC). Ser-740 carries the post-translational modification Phosphoserine. Residues 745–852 (TVSHSGFLYK…WVKCIAKAFV (108 aa)) form the PH 3 domain. The 186-residue stretch at 956–1141 (ASLGDTLSEQ…DLINHYVVVF (186 aa)) folds into the Rho-GAP domain. One can recognise a Ras-associating domain in the interval 1174–1263 (GDFICTVYLE…SHLVVKKYQS (90 aa)). The PH 4 domain maps to 1276–1398 (GDTKHGMMKF…WFATFLSVQH (123 aa)). Phosphoserine occurs at positions 1430 and 1437.

Interacts with SH3KBP1/CIN85 (via SH3 domains). The interaction is independent of EGF and does not affect ARAP1 GTPase-activating activity but is involved in regulating ubiquitination and endocytic trafficking of EGFR. ARAP1 competes with E3 ubiquitin-protein ligase CBL for binding to SH3KBP1, preventing interaction of CBL with SH3KBP1; this is likely to regulate SH3KBP1-mediated internalization of EGFR. Interacts with TNFRSF10A. Post-translationally, phosphorylated by PTK6 following EGF stimulation which enhances EGFR signaling by delaying EGFR down-regulation; the interaction is mediated by the SH2 domain of PTK6. Phosphorylation promotes association with the Golgi apparatus and endosomes. Expressed in the retina where it is detected in Mueller glia (at protein level). Also detected in the retinal pigment epithelium (at protein level). Expressed in osteoclasts (at protein level).

It localises to the cytoplasm. The protein localises to the golgi apparatus. It is found in the trans-Golgi network. The protein resides in the golgi stack membrane. Its subcellular location is the cell membrane. It localises to the endosome. The protein localises to the multivesicular body. It is found in the cell projection. The protein resides in the ruffle. Its subcellular location is the podosome. It localises to the early endosome. Its function is as follows. Phosphatidylinositol 3,4,5-trisphosphate-dependent GTPase-activating protein that modulates actin cytoskeleton remodeling by regulating ARF and RHO family members. Activated by phosphatidylinositol 3,4,5-trisphosphate (PtdIns(3,4,5)P3) binding and, to a lesser extent, by phosphatidylinositol 3,4-bisphosphate (PtdIns(3,4)P2) binding. Has a preference for ARF1 and ARF5. Positively regulates the ring size of circular dorsal ruffles and promotes macropinocytosis. Acts as a bridging factor in osteoclasts to control actin and membrane dynamics. Regulates the condensing of osteoclast podosomes into sealing zones which segregate the bone-facing membrane from other membrane domains and are required for osteoclast resorption activity. Also regulates recruitment of the AP-3 complex to endosomal membranes and trafficking of lysosomal membrane proteins to the ruffled membrane border of osteoclasts to modulate bone resorption. Regulates the endocytic trafficking of EGFR. Regulates the incorporation of CD63 and CD9 into multivesicular bodies. Required in the retinal pigment epithelium (RPE) for photoreceptor survival due to its role in promoting RPE phagocytosis. In Mus musculus (Mouse), this protein is Arf-GAP with Rho-GAP domain, ANK repeat and PH domain-containing protein 1.